The chain runs to 211 residues: tRNA (guanosine(18)-2'-O)-methyltransferase (211 aa).

Thr103, Ile146, and Leu155 together coordinate S-adenosyl-L-methionine.

Belongs to the class IV-like SAM-binding methyltransferase superfamily. RNA methyltransferase TrmH family. In terms of assembly, homodimer.

It carries out the reaction guanosine(18) in tRNA + S-adenosyl-L-methionine = 2'-O-methylguanosine(18) in tRNA + S-adenosyl-L-homocysteine + H(+). Its function is as follows. Catalyzes the 2'-O methylation of guanosine at position 18 in tRNA. Type II methylase, which methylates only a subset of tRNA species. This chain is tRNA (guanosine(18)-2'-O)-methyltransferase, found in Aquifex aeolicus (strain VF5).